We begin with the raw amino-acid sequence, 428 residues long: Adenylosuccinate synthetase (428 aa).

Residues 12–18 (GDEGKGK) and 40–42 (GHT) each bind GTP. Residue Asp13 is the Proton acceptor of the active site. Residues Asp13 and Gly40 each contribute to the Mg(2+) site. Residues 13-16 (DEGK), 38-41 (NAGH), Thr128, Arg142, Gln222, Thr237, and Arg301 contribute to the IMP site. His41 functions as the Proton donor in the catalytic mechanism. Residue 297-303 (VNTGRAR) participates in substrate binding. GTP-binding positions include Arg303, 329–331 (KLD), and 411–413 (STS).

Belongs to the adenylosuccinate synthetase family. In terms of assembly, homodimer. It depends on Mg(2+) as a cofactor.

It localises to the cytoplasm. The enzyme catalyses IMP + L-aspartate + GTP = N(6)-(1,2-dicarboxyethyl)-AMP + GDP + phosphate + 2 H(+). The protein operates within purine metabolism; AMP biosynthesis via de novo pathway; AMP from IMP: step 1/2. Functionally, plays an important role in the de novo pathway of purine nucleotide biosynthesis. Catalyzes the first committed step in the biosynthesis of AMP from IMP. The sequence is that of Adenylosuccinate synthetase from Caulobacter vibrioides (strain ATCC 19089 / CIP 103742 / CB 15) (Caulobacter crescentus).